A 59-amino-acid chain; its full sequence is UPF0181 protein YoaH (59 aa).

This sequence belongs to the UPF0181 family.

This is UPF0181 protein YoaH from Shigella sonnei (strain Ss046).